The chain runs to 190 residues: Lipid A acyltransferase PagP (190 aa).

Residues 1-18 (MKRLISCLTIICALNASA) form the signal peptide. Residues histidine 60, aspartate 103, and serine 104 contribute to the active site.

This sequence belongs to the lipid A palmitoyltransferase family. As to quaternary structure, homodimer.

Its subcellular location is the cell outer membrane. It carries out the reaction a lipid A + a 1,2-diacyl-sn-glycero-3-phosphocholine = a hepta-acyl lipid A + a 2-acyl-sn-glycero-3-phosphocholine. The catalysed reaction is a lipid IVA + a 1,2-diacyl-sn-glycero-3-phosphocholine = a lipid IVB + a 2-acyl-sn-glycero-3-phosphocholine. The enzyme catalyses a lipid IIA + a 1,2-diacyl-sn-glycero-3-phosphocholine = a lipid IIB + a 2-acyl-sn-glycero-3-phosphocholine. Transfers a fatty acid residue from the sn-1 position of a phospholipid to the N-linked hydroxyfatty acid chain on the proximal unit of lipid A or its precursors. The protein is Lipid A acyltransferase PagP of Legionella pneumophila (strain Corby).